The sequence spans 842 residues: Alanine--tRNA ligase (842 aa).

Histidine 549, histidine 553, cysteine 650, and histidine 654 together coordinate Zn(2+).

The protein belongs to the class-II aminoacyl-tRNA synthetase family. It depends on Zn(2+) as a cofactor.

It localises to the cytoplasm. It catalyses the reaction tRNA(Ala) + L-alanine + ATP = L-alanyl-tRNA(Ala) + AMP + diphosphate. Functionally, catalyzes the attachment of alanine to tRNA(Ala) in a two-step reaction: alanine is first activated by ATP to form Ala-AMP and then transferred to the acceptor end of tRNA(Ala). Also edits incorrectly charged Ser-tRNA(Ala) and Gly-tRNA(Ala) via its editing domain. The protein is Alanine--tRNA ligase of Campylobacter jejuni subsp. doylei (strain ATCC BAA-1458 / RM4099 / 269.97).